We begin with the raw amino-acid sequence, 226 residues long: Deoxyribose-phosphate aldolase (226 aa).

The active-site Proton donor/acceptor is the aspartate 96. Lysine 157 (schiff-base intermediate with acetaldehyde) is an active-site residue. Lysine 185 serves as the catalytic Proton donor/acceptor.

The protein belongs to the DeoC/FbaB aldolase family. DeoC type 1 subfamily.

Its subcellular location is the cytoplasm. It catalyses the reaction 2-deoxy-D-ribose 5-phosphate = D-glyceraldehyde 3-phosphate + acetaldehyde. It participates in carbohydrate degradation; 2-deoxy-D-ribose 1-phosphate degradation; D-glyceraldehyde 3-phosphate and acetaldehyde from 2-deoxy-alpha-D-ribose 1-phosphate: step 2/2. In terms of biological role, catalyzes a reversible aldol reaction between acetaldehyde and D-glyceraldehyde 3-phosphate to generate 2-deoxy-D-ribose 5-phosphate. The polypeptide is Deoxyribose-phosphate aldolase (Trichormus variabilis (strain ATCC 29413 / PCC 7937) (Anabaena variabilis)).